Consider the following 439-residue polypeptide: Hemagglutinin-esterase (439 aa).

An N-terminal signal peptide occupies residues 1–22; that stretch reads MGSTCIAMAPRTLLLLIGCQLV. An esterase domain 1 region spans residues 12–132; that stretch reads TLLLLIGCQL…DNKRWMGNKA (121 aa). At 23 to 407 the chain is on the virion surface side; it reads FGFNEPLNIV…PVCIYDPLPV (385 aa). Ser45 acts as the Nucleophile in catalysis. Cys49 and Cys70 are joined by a disulfide. An N-linked (GlcNAc...) asparagine; by host glycan is attached at Asn94. Cys118 and Cys167 are joined by a disulfide. Positions 133–281 are receptor binding; that stretch reads RFYARVYEKM…GNYKAVSLEY (149 aa). N-linked (GlcNAc...) asparagine; by host glycans are attached at residues Asn196, Asn246, Asn309, and Asn316. 2 disulfide bridges follow: Cys202/Cys291 and Cys210/Cys264. An esterase domain 2 region spans residues 282 to 395; that stretch reads LLSLPSKAIC…QCPTAANIGY (114 aa). Cys322 and Cys327 form a disulfide bridge. N-linked (GlcNAc...) asparagine; by host glycosylation is present at Asn331. Catalysis depends on charge relay system residues Asp342 and His345. N-linked (GlcNAc...) asparagine; by host glycosylation is found at Asn360 and Asn374. A disulfide bridge connects residues Cys363 and Cys387. The chain crosses the membrane as a helical span at residues 408 to 428; it reads VLLGVLLGIAVLIIVFLILYF. The Intravirion portion of the chain corresponds to 429–439; that stretch reads MTDSGVRLHEA.

Belongs to the influenza type C/coronaviruses hemagglutinin-esterase family. Homodimer; disulfide-linked. Forms a complex with the M protein in the pre-Golgi. Associates then with S-M complex to form a ternary complex S-M-HE. Post-translationally, N-glycosylated in the host RER.

Its subcellular location is the virion membrane. The protein localises to the host cell membrane. The catalysed reaction is N-acetyl-9-O-acetylneuraminate + H2O = N-acetylneuraminate + acetate + H(+). The enzyme catalyses N-acetyl-4-O-acetylneuraminate + H2O = N-acetylneuraminate + acetate + H(+). Structural protein that makes short spikes at the surface of the virus. Contains receptor binding and receptor-destroying activities. Mediates de-O-acetylation of N-acetyl-4-O-acetylneuraminic acid, which is probably the receptor determinant recognized by the virus on the surface of erythrocytes and susceptible cells. This receptor-destroying activity is important for virus release as it probably helps preventing self-aggregation and ensures the efficient spread of the progeny virus from cell to cell. May serve as a secondary viral attachment protein for initiating infection, the spike protein being the major one. May become a target for both the humoral and the cellular branches of the immune system. The sequence is that of Hemagglutinin-esterase from Murine coronavirus (strain JHM) (MHV-JHM).